A 328-amino-acid chain; its full sequence is UPF0421 protein SSP0904 (328 aa).

The next 4 helical transmembrane spans lie at 26 to 46 (LFCL…IVTI), 61 to 81 (LPAT…FGDQ), 84 to 104 (FAYA…NLHV), and 132 to 152 (LLTA…ILPP).

It belongs to the UPF0421 family.

It is found in the cell membrane. This Staphylococcus saprophyticus subsp. saprophyticus (strain ATCC 15305 / DSM 20229 / NCIMB 8711 / NCTC 7292 / S-41) protein is UPF0421 protein SSP0904.